Reading from the N-terminus, the 630-residue chain is 1-deoxy-D-xylulose-5-phosphate synthase (630 aa).

Residues histidine 72 and glycine 113–serine 115 contribute to the thiamine diphosphate site. Aspartate 144 is a Mg(2+) binding site. Thiamine diphosphate-binding positions include glycine 145–alanine 146, asparagine 173, tyrosine 284, and glutamate 367. Position 173 (asparagine 173) interacts with Mg(2+).

Belongs to the transketolase family. DXPS subfamily. Homodimer. Mg(2+) serves as cofactor. The cofactor is thiamine diphosphate.

The catalysed reaction is D-glyceraldehyde 3-phosphate + pyruvate + H(+) = 1-deoxy-D-xylulose 5-phosphate + CO2. Its pathway is metabolic intermediate biosynthesis; 1-deoxy-D-xylulose 5-phosphate biosynthesis; 1-deoxy-D-xylulose 5-phosphate from D-glyceraldehyde 3-phosphate and pyruvate: step 1/1. Catalyzes the acyloin condensation reaction between C atoms 2 and 3 of pyruvate and glyceraldehyde 3-phosphate to yield 1-deoxy-D-xylulose-5-phosphate (DXP). This Bacillus cereus (strain B4264) protein is 1-deoxy-D-xylulose-5-phosphate synthase.